We begin with the raw amino-acid sequence, 211 residues long: Allatostatins MIP (211 aa).

The N-terminal stretch at Met-1 to Gly-24 is a signal peptide. Residues Asn-25–Asn-63 constitute a propeptide that is removed on maturation. Trp-74 carries the post-translational modification Tryptophan amide. A propeptide spanning residues Ser-78–Glu-148 is cleaved from the precursor. The segment covering Ala-115–Gly-135 has biased composition (low complexity). Residues Ala-115 to Ala-142 form a disordered region. Tryptophan amide occurs at positions 159, 175, 189, and 202. The disordered stretch occupies residues Trp-168–Gly-190. Positions Ser-206 to Asn-211 are excised as a propeptide.

In larvae, strongly expressed in the midgut region before and in between the copper cells, and in a group of cells in the posterior part of the larval midgut. Expressed in the neurons of many areas including the subesophageal ganglion/tritocerebrum (SOG), olfactory glomeruli, lateral ventral protocerebrum, mushroom body, the optic lobe medulla and in the antennal lobes.

It localises to the secreted. Functionally, ligand for the sex peptide receptor (SPR). Stabilizes sleep and maintains sleep homeostasis to inhibit the activity of wake-promoting circuits, such as those that involve the pigment dispersing factor (pdf) neurons. Regulated by the circadian clock network and pathways associated with a sleep homeostat. May also have a regulatory role in gut motility. The sequence is that of Allatostatins MIP (Mip) from Drosophila melanogaster (Fruit fly).